We begin with the raw amino-acid sequence, 426 residues long: Mannose-1-phosphate guanyltransferase alpha-B (426 aa).

The protein belongs to the transferase hexapeptide repeat family.

The catalysed reaction is alpha-D-mannose 1-phosphate + GTP + H(+) = GDP-alpha-D-mannose + diphosphate. Its pathway is nucleotide-sugar biosynthesis; GDP-alpha-D-mannose biosynthesis; GDP-alpha-D-mannose from alpha-D-mannose 1-phosphate (GTP route): step 1/1. This Xenopus laevis (African clawed frog) protein is Mannose-1-phosphate guanyltransferase alpha-B (gmppa-b).